We begin with the raw amino-acid sequence, 2664 residues long: Non-reducing polyketide synthase sorB (2664 aa).

The segment at 21–45 (KSAPQSGNTADDIPNAASQPDTTST) is disordered. Residues 36–45 (AASQPDTTST) show a composition bias toward polar residues. Residues 112–281 (ADHARRLAEW…TTPSRIASDL (170 aa)) are N-terminal acylcarrier protein transacylase domain (SAT). Catalysis depends on Cys184, which acts as the Nucleophile; for transacylase activity. The active-site Proton donor/acceptor; for transacylase activity is the His302. Positions 428–849 (DNDIAVIGMS…GSNASMVIKQ (422 aa)) constitute a Ketosynthase family 3 (KS3) domain. Active-site for beta-ketoacyl synthase activity residues include Cys596, His731, and His772. The interval 961 to 1276 (CFGGQVSKSV…TQGTRQLADV (316 aa)) is malonyl-CoA:ACP transacylase (MAT) domain. Residues 1345–1477 (PGLYTFMGYG…GQLEFHRADD (133 aa)) are N-terminal hotdog fold. The PKS/mFAS DH domain occupies 1345–1663 (PGLYTFMGYG…FSARSMSELF (319 aa)). A product template (PT) domain region spans residues 1376–1548 (VSGYTLGKTV…PSESAGRAVK (173 aa)). Positions 1507 to 1663 (DEVIQGQSIY…FSARSMSELF (157 aa)) are C-terminal hotdog fold. A Carrier domain is found at 1711 to 1785 (TELWAKLLPV…GILAFLQSTL (75 aa)). Ser1745 is modified (O-(pantetheine 4'-phosphoryl)serine). The segment at 1789 to 1820 (GEDDASQSSDAASSSRNTPPSSNDGILATPSP) is disordered. Positions 1794-1803 (SQSSDAASSS) are enriched in low complexity. The tract at residues 2015-2197 (FQLMADFLSR…DAGYKHVEWT (183 aa)) is methyltransferase domain. The interval 2281-2526 (VTGTTGSLGS…TLRSFPAVEG (246 aa)) is NADPH-binding (R) domain.

The cofactor is pantetheine 4'-phosphate.

Its pathway is secondary metabolite biosynthesis. In terms of biological role, non-reducing polyketide synthase; part of the gene cluster that mediates the biosynthesis of sorbicillinoids, a diverse group of yellow secondary metabolites that restrict growth of competing pathogenic fungi but not of bacteria. Sorbicillinoids biosynthesis requires the action of two PKSs. SorA iteratively combines three acetyl units and the growing chain is modified by the ketoacyl reductase subunit, and optional by the enoyl reductase subunit in the second cycle. The polyketide is then handed over to the PKS SorB, which adds three more acetyl units, and two methyl groups. SorB releases an aldehyde, which undergoes spontaneous cyclization resulting in the formation of sorbicillin or 2',3'-dihydrosorbicillin. The monooxygenase sorC oxidizes sorbicillin and 2',3'-dihydrosorbicillin to 2',3'-dihydrosorbicillinol and sorbicillinol, respectively. The oxidoreductase sorD further converts sorbicillinol into oxosorbicillinol. Sorbicillinol is the building block for the other sorbicillinoids such as disorbicillinol, bisvertinolon, and dihydrobisvertinolone. This chain is Non-reducing polyketide synthase sorB, found in Penicillium rubens (strain ATCC 28089 / DSM 1075 / NRRL 1951 / Wisconsin 54-1255) (Penicillium chrysogenum).